We begin with the raw amino-acid sequence, 105 residues long: Platelet factor 4 (105 aa).

Residues 1–29 form the signal peptide; that stretch reads MSVAAVFRGLRPSPELLLLGLLFLPAVVA. Threonine 31 is a glycosylation site (O-linked (GalNAc...) threonine). Disulfide bonds link cysteine 44–cysteine 71 and cysteine 46–cysteine 87. Serine 61 bears the Phosphoserine mark. Residue 96–102 participates in heparin binding; sequence KKVIKKI.

Belongs to the intercrine alpha (chemokine CxC) family. As to quaternary structure, homotetramer. Interacts with TNFAIP6 (via Link domain). Interacts with CCR1. Interacts with CXCR3. Interacts with THBD; this interaction enhances generation of activated protein C.

Its subcellular location is the secreted. Functionally, chemokine released during platelet aggregation that plays a role in different biological processes including hematopoiesis, cell proliferation, differentiation, and activation. Acts via different functional receptors including CCR1, CXCR3A or CXCR3B. Upon interaction with CXCR3A receptor, induces activated T-lymphocytes migration mediated via downstream Ras/extracellular signal-regulated kinase (ERK) signaling. Neutralizes the anticoagulant effect of heparin by binding more strongly to heparin than to the chondroitin-4-sulfate chains of the carrier molecule. Plays a role in the inhibition of hematopoiesis and in the maintenance of hematopoietic stem cell (HSC) quiescence. Chemotactic for neutrophils and monocytes via CCR1. Inhibits endothelial cell proliferation. In cooperation with toll-like receptor 8/TLR8, induces chromatin remodeling and activates inflammatory gene expression via the TBK1-IRF5 axis. In addition, induces myofibroblast differentiation and collagen synthesis in different precursor cells, including endothelial cells, by stimulating endothelial-to-mesenchymal transition. Interacts with thrombomodulin/THBD to enhance the activation of protein C and thus potentiates its anticoagulant activity. This is Platelet factor 4 (Pf4) from Mus musculus (Mouse).